Consider the following 267-residue polypeptide: L-erythrulose-1-phosphate isomerase (267 aa).

H95 acts as the Electrophile in catalysis. E168 (proton acceptor) is an active-site residue. Substrate contacts are provided by G174 and S211.

Belongs to the triosephosphate isomerase family. As to quaternary structure, homodimer.

The protein resides in the cytoplasm. It catalyses the reaction L-erythrulose 1-phosphate = D-erythrulose 4-phosphate. The protein operates within carbohydrate metabolism; erythritol degradation. Its function is as follows. Catalyzes the isomerization of D-erythrulose-4P to L-erythrulose-1P. This chain is L-erythrulose-1-phosphate isomerase, found in Rhizobium etli (strain ATCC 51251 / DSM 11541 / JCM 21823 / NBRC 15573 / CFN 42).